The chain runs to 241 residues: UDP-2,3-diacylglucosamine hydrolase (241 aa).

D8, H10, D41, N78, and H113 together coordinate Mn(2+). Position 78-79 (78-79) interacts with substrate; the sequence is NR. D121, S159, N163, K166, and H194 together coordinate substrate. Residues H194 and H196 each coordinate Mn(2+).

This sequence belongs to the LpxH family. Requires Mn(2+) as cofactor.

Its subcellular location is the cell inner membrane. It catalyses the reaction UDP-2-N,3-O-bis[(3R)-3-hydroxytetradecanoyl]-alpha-D-glucosamine + H2O = 2-N,3-O-bis[(3R)-3-hydroxytetradecanoyl]-alpha-D-glucosaminyl 1-phosphate + UMP + 2 H(+). It functions in the pathway glycolipid biosynthesis; lipid IV(A) biosynthesis; lipid IV(A) from (3R)-3-hydroxytetradecanoyl-[acyl-carrier-protein] and UDP-N-acetyl-alpha-D-glucosamine: step 4/6. Functionally, hydrolyzes the pyrophosphate bond of UDP-2,3-diacylglucosamine to yield 2,3-diacylglucosamine 1-phosphate (lipid X) and UMP by catalyzing the attack of water at the alpha-P atom. Involved in the biosynthesis of lipid A, a phosphorylated glycolipid that anchors the lipopolysaccharide to the outer membrane of the cell. This chain is UDP-2,3-diacylglucosamine hydrolase, found in Shewanella putrefaciens (strain CN-32 / ATCC BAA-453).